Here is a 496-residue protein sequence, read N- to C-terminus: Glycerol kinase (496 aa).

Residue threonine 12 coordinates ADP. ATP-binding residues include threonine 12, threonine 13, and serine 14. Threonine 12 lines the sn-glycerol 3-phosphate pocket. Arginine 16 lines the ADP pocket. The sn-glycerol 3-phosphate site is built by arginine 82, glutamate 83, and tyrosine 134. The glycerol site is built by arginine 82, glutamate 83, and tyrosine 134. At histidine 230 the chain carries Phosphohistidine; by HPr. Residue aspartate 244 coordinates sn-glycerol 3-phosphate. Positions 244 and 245 each coordinate glycerol. Positions 266 and 309 each coordinate ADP. Residues threonine 266, glycine 309, glutamine 313, and glycine 410 each coordinate ATP. Positions 410 and 414 each coordinate ADP.

The protein belongs to the FGGY kinase family. As to quaternary structure, homotetramer and homodimer (in equilibrium). Post-translationally, the phosphoenolpyruvate-dependent sugar phosphotransferase system (PTS), including enzyme I, and histidine-containing protein (HPr) are required for the phosphorylation, which leads to the activation of the enzyme.

The enzyme catalyses glycerol + ATP = sn-glycerol 3-phosphate + ADP + H(+). It functions in the pathway polyol metabolism; glycerol degradation via glycerol kinase pathway; sn-glycerol 3-phosphate from glycerol: step 1/1. With respect to regulation, activated by phosphorylation and inhibited by fructose 1,6-bisphosphate (FBP). Functionally, key enzyme in the regulation of glycerol uptake and metabolism. Catalyzes the phosphorylation of glycerol to yield sn-glycerol 3-phosphate. In Geobacillus kaustophilus (strain HTA426), this protein is Glycerol kinase.